We begin with the raw amino-acid sequence, 91 residues long: PqqA binding protein (91 aa).

It belongs to the PqqD family. In terms of assembly, monomer. Interacts with PqqE.

Its pathway is cofactor biosynthesis; pyrroloquinoline quinone biosynthesis. In terms of biological role, functions as a PqqA binding protein and presents PqqA to PqqE, in the pyrroloquinoline quinone (PQQ) biosynthetic pathway. The sequence is that of PqqA binding protein from Pseudomonas fluorescens (strain Pf0-1).